The following is a 428-amino-acid chain: L-rhamnonate dehydratase (428 aa).

Positions 56 and 82 each coordinate substrate. Positions 249, 275, and 303 each coordinate Mg(2+). The Proton acceptor role is filled by histidine 352. Glutamate 372 provides a ligand contact to substrate.

This sequence belongs to the mandelate racemase/muconate lactonizing enzyme family. RhamD subfamily. As to quaternary structure, homooctamer; tetramer of dimers. Requires Mg(2+) as cofactor.

It carries out the reaction L-rhamnonate = 2-dehydro-3-deoxy-L-rhamnonate + H2O. Its function is as follows. Catalyzes the dehydration of L-rhamnonate to 2-keto-3-deoxy-L-rhamnonate (KDR). This is L-rhamnonate dehydratase from Shigella sonnei (strain Ss046).